Reading from the N-terminus, the 158-residue chain is ATP synthase subunit b', chloroplastic (158 aa).

A helical membrane pass occupies residues 25-45 (ATLPLMALQFIILTTILNFIF).

This sequence belongs to the ATPase B chain family. In terms of assembly, F-type ATPases have 2 components, F(1) - the catalytic core - and F(0) - the membrane proton channel. F(1) has five subunits: alpha(3), beta(3), gamma(1), delta(1), epsilon(1). F(0) has four main subunits: a(1), b(1), b'(1) and c(10-14). The alpha and beta chains form an alternating ring which encloses part of the gamma chain. F(1) is attached to F(0) by a central stalk formed by the gamma and epsilon chains, while a peripheral stalk is formed by the delta, b and b' chains.

The protein localises to the plastid. It is found in the chloroplast thylakoid membrane. F(1)F(0) ATP synthase produces ATP from ADP in the presence of a proton or sodium gradient. F-type ATPases consist of two structural domains, F(1) containing the extramembraneous catalytic core and F(0) containing the membrane proton channel, linked together by a central stalk and a peripheral stalk. During catalysis, ATP synthesis in the catalytic domain of F(1) is coupled via a rotary mechanism of the central stalk subunits to proton translocation. Its function is as follows. Component of the F(0) channel, it forms part of the peripheral stalk, linking F(1) to F(0). The b'-subunit is a diverged and duplicated form of b found in plants and photosynthetic bacteria. In Gracilaria tenuistipitata var. liui (Red alga), this protein is ATP synthase subunit b', chloroplastic.